Consider the following 421-residue polypeptide: Putative hydro-lyase KRH_21160 (421 aa).

Disordered stretches follow at residues Thr-200–Thr-298 and Thr-312–Arg-421. Residues Gly-224–Arg-237 are compositionally biased toward basic residues. 2 stretches are compositionally biased toward low complexity: residues Pro-243 to Pro-260 and Ser-370 to Ala-380.

This sequence belongs to the D-glutamate cyclase family.

This Kocuria rhizophila (strain ATCC 9341 / DSM 348 / NBRC 103217 / DC2201) protein is Putative hydro-lyase KRH_21160.